Consider the following 162-residue polypeptide: SsrA-binding protein (162 aa).

The protein belongs to the SmpB family.

Its subcellular location is the cytoplasm. Its function is as follows. Required for rescue of stalled ribosomes mediated by trans-translation. Binds to transfer-messenger RNA (tmRNA), required for stable association of tmRNA with ribosomes. tmRNA and SmpB together mimic tRNA shape, replacing the anticodon stem-loop with SmpB. tmRNA is encoded by the ssrA gene; the 2 termini fold to resemble tRNA(Ala) and it encodes a 'tag peptide', a short internal open reading frame. During trans-translation Ala-aminoacylated tmRNA acts like a tRNA, entering the A-site of stalled ribosomes, displacing the stalled mRNA. The ribosome then switches to translate the ORF on the tmRNA; the nascent peptide is terminated with the 'tag peptide' encoded by the tmRNA and targeted for degradation. The ribosome is freed to recommence translation, which seems to be the essential function of trans-translation. This Granulibacter bethesdensis (strain ATCC BAA-1260 / CGDNIH1) protein is SsrA-binding protein.